We begin with the raw amino-acid sequence, 249 residues long: tRNA pseudouridine synthase A (249 aa).

Catalysis depends on Asp53, which acts as the Nucleophile. Residue Tyr111 participates in substrate binding.

The protein belongs to the tRNA pseudouridine synthase TruA family. Homodimer.

It catalyses the reaction uridine(38/39/40) in tRNA = pseudouridine(38/39/40) in tRNA. Formation of pseudouridine at positions 38, 39 and 40 in the anticodon stem and loop of transfer RNAs. This Streptococcus pyogenes serotype M1 protein is tRNA pseudouridine synthase A.